The chain runs to 91 residues: UPF0367 protein cce_2199 (91 aa).

This sequence belongs to the UPF0367 family.

This is UPF0367 protein cce_2199 from Crocosphaera subtropica (strain ATCC 51142 / BH68) (Cyanothece sp. (strain ATCC 51142)).